The following is an 875-amino-acid chain: Serine/threonine-protein kinase D2 (875 aa).

Residues 1 to 33 (MAAAPSHPAGLPCSPGPGSPPPPGGSDLQSLPP) form a disordered region. Residues 14 to 24 (SPGPGSPPPPG) show a composition bias toward pro residues. A phosphoserine mark is found at Ser26 and Ser30. The residue at position 87 (Tyr87) is a Phosphotyrosine. The segment at 138 to 188 (PHALTVHSYRAPAFCDHCGEMLFGLVRQGLKCDGCGLNYHKRCAFSIPNNC) adopts a Phorbol-ester/DAG-type 1 zinc-finger fold. A phosphoserine mark is found at Ser197, Ser198, Ser200, Ser203, Ser206, Ser211, Ser212, and Ser214. Residues 224–247 (RSTTDLLPRRPPSSSSSSSSSSFY) are disordered. Over residues 236–245 (SSSSSSSSSS) the composition is skewed to low complexity. Position 244 is a phosphoserine; by CSNK1D and CSNK1E (Ser244). Ser245 is subject to Phosphoserine. The Phorbol-ester/DAG-type 2 zinc-finger motif lies at 265 to 315 (PHTFLIHSYTRPTVCQACKKLLKGLFRQGLQCKDCKFNCHKRCATRVPNDC). Positions 398-510 (TTLREGWVVH…WETAIRQALM (113 aa)) constitute a PH domain. Tyr408 is modified (phosphotyrosine). A Phosphotyrosine; by ABL1 modification is found at Tyr439. Ser519 is modified (phosphoserine). The Protein kinase domain occupies 552 to 808 (IFPDEVLGSG…VDKSLSHPWL (257 aa)). Residues 558-566 (LGSGQFGVV) and Lys581 contribute to the ATP site. Residue Asp675 is the Proton acceptor of the active site. Ser707 is modified (phosphoserine; by PKC). Ser711 bears the Phosphoserine mark. Phosphotyrosine; by ABL1 is present on Tyr718. The Important for ABL1-mediated Tyr-718 phosphorylation signature appears at 725–727 (LNQ). Ser873 bears the Phosphoserine; by autocatalysis mark.

Belongs to the protein kinase superfamily. CAMK Ser/Thr protein kinase family. PKD subfamily. As to quaternary structure, interacts (via C-terminus) with LCK. Interacts (via N-terminus and zing-finger domain 1 and 2) with PRKCD in response to oxidative stress; the interaction is independent of PRKD2 tyrosine phosphorylation. Mg(2+) serves as cofactor. In terms of processing, phosphorylation of Ser-873 correlates with the activation status of the kinase. Ser-707 is probably phosphorylated by PKC. Phosphorylation at Ser-244 by CSNK1D and CSNK1E promotes nuclear localization and substrate targeting. Phosphorylation at Ser-244, Ser-707 and Ser-711 is required for nuclear localization. Phosphorylated at Tyr-438 by ABL1 in response to oxidative stress. Phosphorylated at Tyr-718 by ABL1 specifically in response to oxidative stress; requires prior phosphorylation at Ser-707 or/and Ser-711.

It localises to the cytoplasm. The protein localises to the cell membrane. The protein resides in the golgi apparatus. Its subcellular location is the trans-Golgi network. The enzyme catalyses L-seryl-[protein] + ATP = O-phospho-L-seryl-[protein] + ADP + H(+). The catalysed reaction is L-threonyl-[protein] + ATP = O-phospho-L-threonyl-[protein] + ADP + H(+). Its activity is regulated as follows. Activated by DAG and phorbol esters. Phorbol-ester/DAG-type domains bind DAG, mediating translocation to membranes. Autophosphorylation of Ser-711 and phosphorylation of Ser-707 by PKC relieves auto-inhibition by the PH domain. Catalytic activity is further increased by phosphorylation at Tyr-718 in response to oxidative stress. Its function is as follows. Serine/threonine-protein kinase that converts transient diacylglycerol (DAG) signals into prolonged physiological effects downstream of PKC, and is involved in the regulation of cell proliferation via MAPK1/3 (ERK1/2) signaling, oxidative stress-induced NF-kappa-B activation, inhibition of HDAC7 transcriptional repression, signaling downstream of T-cell antigen receptor (TCR) and cytokine production, and plays a role in Golgi membrane trafficking, angiogenesis, secretory granule release and cell adhesion. May potentiate mitogenesis induced by the neuropeptide bombesin by mediating an increase in the duration of MAPK1/3 (ERK1/2) signaling, which leads to accumulation of immediate-early gene products including FOS that stimulate cell cycle progression. In response to oxidative stress, is phosphorylated at Tyr-438 and Tyr-718 by ABL1, which leads to the activation of PRKD2 without increasing its catalytic activity, and mediates activation of NF-kappa-B. In response to the activation of the gastrin receptor CCKBR, is phosphorylated at Ser-244 by CSNK1D and CSNK1E, translocates to the nucleus, phosphorylates HDAC7, leading to nuclear export of HDAC7 and inhibition of HDAC7 transcriptional repression of NR4A1/NUR77. Upon TCR stimulation, is activated independently of ZAP70, translocates from the cytoplasm to the nucleus and is required for interleukin-2 (IL2) promoter up-regulation. During adaptive immune responses, is required in peripheral T-lymphocytes for the production of the effector cytokines IL2 and IFNG after TCR engagement and for optimal induction of antibody responses to antigens. In epithelial cells stimulated with lysophosphatidic acid (LPA), is activated through a PKC-dependent pathway and mediates LPA-stimulated interleukin-8 (IL8) secretion via a NF-kappa-B-dependent pathway. During TCR-induced T-cell activation, interacts with and is activated by the tyrosine kinase LCK, which results in the activation of the NFAT transcription factors. In the trans-Golgi network (TGN), regulates the fission of transport vesicles that are on their way to the plasma membrane and in polarized cells is involved in the transport of proteins from the TGN to the basolateral membrane. Plays an important role in endothelial cell proliferation and migration prior to angiogenesis, partly through modulation of the expression of KDR/VEGFR2 and FGFR1, two key growth factor receptors involved in angiogenesis. In secretory pathway, is required for the release of chromogranin-A (CHGA)-containing secretory granules from the TGN. Downstream of PRKCA, plays important roles in angiotensin-2-induced monocyte adhesion to endothelial cells. The polypeptide is Serine/threonine-protein kinase D2 (Prkd2) (Rattus norvegicus (Rat)).